We begin with the raw amino-acid sequence, 265 residues long: Small ribosomal subunit protein uS5 (265 aa).

A compositionally biased stretch (low complexity) spans 1-15 (MADTQPAQEAPAADA). Residues 1–44 (MADTQPAQEAPAADAPRAERNFGRGRGGRGGRGRGRGGPGEEKE) are disordered. The segment covering 26-35 (RGGRGGRGRG) has biased composition (basic residues). Residues 88–151 (LHDEMMKIYP…IAAKLNIVPV (64 aa)) enclose the S5 DRBM domain. The tract at residues 245–265 (TEPSRDPTDEHGELLAEMTTA) is disordered. The span at 246-258 (EPSRDPTDEHGEL) shows a compositional bias: basic and acidic residues.

Belongs to the universal ribosomal protein uS5 family.

Functionally, component of the ribosome, a large ribonucleoprotein complex responsible for the synthesis of proteins in the cell. The small ribosomal subunit (SSU) binds messenger RNAs (mRNAs) and translates the encoded message by selecting cognate aminoacyl-transfer RNA (tRNA) molecules. The large subunit (LSU) contains the ribosomal catalytic site termed the peptidyl transferase center (PTC), which catalyzes the formation of peptide bonds, thereby polymerizing the amino acids delivered by tRNAs into a polypeptide chain. The nascent polypeptides leave the ribosome through a tunnel in the LSU and interact with protein factors that function in enzymatic processing, targeting, and the membrane insertion of nascent chains at the exit of the ribosomal tunnel. Plays a role in the assembly and function of the 40S ribosomal subunit. Mutations in this protein affects the control of translational fidelity. Involved in nucleolar processing of pre-18S ribosomal RNA and ribosome assembly. The sequence is that of Small ribosomal subunit protein uS5 from Leishmania amazonensis.